Consider the following 537-residue polypeptide: Chaperonin GroEL (537 aa).

ATP-binding positions include 29–32 (TLGP), 86–90 (DGTTT), Gly-413, 477–479 (NAA), and Asp-493.

It belongs to the chaperonin (HSP60) family. As to quaternary structure, forms a cylinder of 14 subunits composed of two heptameric rings stacked back-to-back. Interacts with the co-chaperonin GroES.

The protein localises to the cytoplasm. It carries out the reaction ATP + H2O + a folded polypeptide = ADP + phosphate + an unfolded polypeptide.. In terms of biological role, together with its co-chaperonin GroES, plays an essential role in assisting protein folding. The GroEL-GroES system forms a nano-cage that allows encapsulation of the non-native substrate proteins and provides a physical environment optimized to promote and accelerate protein folding. This chain is Chaperonin GroEL, found in Parascardovia denticolens (Bifidobacterium denticolens).